A 501-amino-acid chain; its full sequence is Circadian clock oscillator protein KaiC (501 aa).

KaiC domains follow at residues 1-232 (MQVQ…ITVF) and 246-501 (IRIS…REKK). Glycine 34, threonine 35, glycine 36, lysine 37, threonine 38, serine 74, lysine 209, leucine 210, arginine 211, threonine 213, histidine 215, threonine 275, glycine 276, threonine 277, glycine 278, lysine 279, and threonine 280 together coordinate ATP. Threonine 38 contacts Mg(2+). The Mg(2+) site is built by threonine 280 and glutamate 303. An ATP-binding site is contributed by tryptophan 316. Position 416 is a phosphoserine; by autocatalysis (serine 416). A Phosphothreonine; by autocatalysis modification is found at threonine 417. Arginine 436, lysine 442, methionine 443, arginine 444, serine 446, histidine 448, and lysine 450 together coordinate ATP.

This sequence belongs to the KaiC family. As to quaternary structure, homohexamer; hexamerization is dependent on ATP-binding. Component of the KaiBC complex. KaiC interacts with SasA, activating its autokinase function and leading to RpaA activation. Mg(2+) is required as a cofactor. Phosphorylated on serine and threonine residues by autocatalysis. Has a 4 step phosphorylation cycle; the autokinase acts first on Thr-417, then Ser-416. When Ser-416 is modified KaiC switches to an autophosphatase mode, acting first on phospho-Thr-417 then phospho-Ser-416.

The enzyme catalyses L-seryl-[protein] + ATP = O-phospho-L-seryl-[protein] + ADP + H(+). It carries out the reaction L-threonyl-[protein] + ATP = O-phospho-L-threonyl-[protein] + ADP + H(+). The catalysed reaction is ATP + H2O = ADP + phosphate + H(+). Central component of the KaiBC oscillator complex, which constitutes the main circadian regulator in cyanobacteria. Its composition changes during the circadian cycle to control KaiC phosphorylation. Autophosphorylates and has a weak ATPase activity; ATPase activity defines the circadian period. This is Circadian clock oscillator protein KaiC from Prochlorococcus marinus (strain SARG / CCMP1375 / SS120).